Here is a 1141-residue protein sequence, read N- to C-terminus: DNA-directed RNA polymerase subunit beta (1141 aa).

2 stretches are compositionally biased toward acidic residues: residues 1063–1074 (EIEIKEDDDDVS) and 1096–1141 (GGNE…GDEE). Positions 1063 to 1141 (EIEIKEDDDD…VPDEAYGDEE (79 aa)) are disordered.

This sequence belongs to the RNA polymerase beta chain family. The RNAP catalytic core consists of 2 alpha, 1 beta, 1 beta' and 1 omega subunit. When a sigma factor is associated with the core the holoenzyme is formed, which can initiate transcription.

It catalyses the reaction RNA(n) + a ribonucleoside 5'-triphosphate = RNA(n+1) + diphosphate. Its function is as follows. DNA-dependent RNA polymerase catalyzes the transcription of DNA into RNA using the four ribonucleoside triphosphates as substrates. The chain is DNA-directed RNA polymerase subunit beta from Moorella thermoacetica (strain ATCC 39073 / JCM 9320).